The sequence spans 396 residues: Probable mannan endo-1,4-beta-mannosidase A-2 (396 aa).

The N-terminal stretch at 1 to 21 is a signal peptide; the sequence is MKVPRLLLALGGLASIHIASA. Tryptophan 99 contributes to the substrate binding site. N-linked (GlcNAc...) asparagine glycosylation is present at asparagine 120. Asparagine 212 contacts substrate. Glutamate 213 serves as the catalytic Proton donor. An N-linked (GlcNAc...) asparagine glycan is attached at asparagine 270. Substrate is bound at residue tyrosine 288. Glutamate 321 (nucleophile) is an active-site residue. Residue tryptophan 351 participates in substrate binding.

It belongs to the glycosyl hydrolase 5 (cellulase A) family.

It localises to the secreted. The enzyme catalyses Random hydrolysis of (1-&gt;4)-beta-D-mannosidic linkages in mannans, galactomannans and glucomannans.. Its function is as follows. Endo-1,4-mannanase, a crucial enzyme for depolymerization of seed galactomannans and wood galactoglucomannans. The polypeptide is Probable mannan endo-1,4-beta-mannosidase A-2 (manA-2) (Aspergillus terreus (strain NIH 2624 / FGSC A1156)).